The primary structure comprises 600 residues: Elongation factor 4 (600 aa).

The region spanning 5 to 187 (SRIRNFSIIA…AIVTRLPPPK (183 aa)) is the tr-type G domain. Residues 17-22 (DHGKST) and 134-137 (NKID) each bind GTP.

Belongs to the TRAFAC class translation factor GTPase superfamily. Classic translation factor GTPase family. LepA subfamily.

It is found in the cell inner membrane. The enzyme catalyses GTP + H2O = GDP + phosphate + H(+). Functionally, required for accurate and efficient protein synthesis under certain stress conditions. May act as a fidelity factor of the translation reaction, by catalyzing a one-codon backward translocation of tRNAs on improperly translocated ribosomes. Back-translocation proceeds from a post-translocation (POST) complex to a pre-translocation (PRE) complex, thus giving elongation factor G a second chance to translocate the tRNAs correctly. Binds to ribosomes in a GTP-dependent manner. The polypeptide is Elongation factor 4 (Rhodospirillum centenum (strain ATCC 51521 / SW)).